The primary structure comprises 178 residues: Large ribosomal subunit protein uL6 (178 aa).

This sequence belongs to the universal ribosomal protein uL6 family. In terms of assembly, part of the 50S ribosomal subunit.

In terms of biological role, this protein binds to the 23S rRNA, and is important in its secondary structure. It is located near the subunit interface in the base of the L7/L12 stalk, and near the tRNA binding site of the peptidyltransferase center. This Corynebacterium urealyticum (strain ATCC 43042 / DSM 7109) protein is Large ribosomal subunit protein uL6.